The chain runs to 53 residues: Large ribosomal subunit protein bL32c (53 aa).

This sequence belongs to the bacterial ribosomal protein bL32 family.

Its subcellular location is the plastid. It is found in the chloroplast. The chain is Large ribosomal subunit protein bL32c (rpl32) from Guillardia theta (Cryptophyte).